Reading from the N-terminus, the 346-residue chain is SSTHKIPNVMLLAHLTPGSRKDTEPLFKSLLTSPPAEKLVLTRFLPLQFVTLSVHDAENMRLKVKLVSGRAYYLQLCTSACKQDTLFSQWVALISLLNQEKAKVSKVSEVSSLSGITNSTDVTGSTDVMDITAFTAILTPYMYAGRGPEHVRDSIDFSEFTDITDITDVTDLPENEVPEVPDIRIVTEVIEVREATEVTDHSDITNCSGVTVVFENNDLIRAKQEEKEKLKNILKPGCLQDTKSKSELKESSKHVTISNITLTFEGKRYFQTTLTPVESEANTSKEMENKTSEEKTPDFQSTALEAEESRSLRTESNTSGNECEERKVKQKKTKLVEKHVRQPKDF.

Residues 275-346 (TPVESEANTS…EKHVRQPKDF (72 aa)) form a disordered region. Basic and acidic residues-rich tracts occupy residues 283-297 (TSKEMENKTSEEKTP) and 334-346 (KLVEKHVRQPKDF).

This sequence belongs to the GARIN family. In terms of assembly, interacts with CALM1.

It localises to the cell projection. It is found in the cilium. Its subcellular location is the flagellum. In terms of biological role, seems to play a role in sperm motility. This chain is Golgi-associated RAB2 interactor protein 2 (GARIN2), found in Macaca fascicularis (Crab-eating macaque).